The sequence spans 1145 residues: Nucleolar protein 6 (1145 aa).

Residues 1–46 are disordered; that stretch reads MQKKRNRAGPPQQEAASDDGEMSDSSDKMEVAQGKGKSAVKRAPDA.

The protein belongs to the NRAP family. In terms of assembly, part of the small subunit (SSU) processome, composed of more than 70 proteins and the RNA chaperone small nucleolar RNA (snoRNA) U3.

Its subcellular location is the nucleus. The protein resides in the nucleolus. It localises to the chromosome. In terms of biological role, part of the small subunit (SSU) processome, first precursor of the small eukaryotic ribosomal subunit. During the assembly of the SSU processome in the nucleolus, many ribosome biogenesis factors, an RNA chaperone and ribosomal proteins associate with the nascent pre-rRNA and work in concert to generate RNA folding, modifications, rearrangements and cleavage as well as targeted degradation of pre-ribosomal RNA by the RNA exosome. The polypeptide is Nucleolar protein 6 (nol6) (Xenopus tropicalis (Western clawed frog)).